The chain runs to 170 residues: RNA pyrophosphohydrolase (170 aa).

In terms of domain architecture, Nudix hydrolase spans 6–149; it reads GFRPNVGIVI…KRDVYRRALK (144 aa). A Nudix box motif is present at residues 38-59; it reads GGIDDGETPEQAMYRELYEEVG.

This sequence belongs to the Nudix hydrolase family. RppH subfamily. A divalent metal cation is required as a cofactor.

Functionally, accelerates the degradation of transcripts by removing pyrophosphate from the 5'-end of triphosphorylated RNA, leading to a more labile monophosphorylated state that can stimulate subsequent ribonuclease cleavage. This Aliivibrio salmonicida (strain LFI1238) (Vibrio salmonicida (strain LFI1238)) protein is RNA pyrophosphohydrolase.